The chain runs to 117 residues: Large ribosomal subunit protein bL20c (117 aa).

The protein belongs to the bacterial ribosomal protein bL20 family.

The protein resides in the plastid. It localises to the chloroplast. Binds directly to 23S ribosomal RNA and is necessary for the in vitro assembly process of the 50S ribosomal subunit. It is not involved in the protein synthesizing functions of that subunit. The sequence is that of Large ribosomal subunit protein bL20c from Carica papaya (Papaya).